A 361-amino-acid polypeptide reads, in one-letter code: MPAQDVLTRKTGVIVGDDVKALFDYAKEHKFAIPAINVTSSSTVVAALEAARDNKSPIILQTSNGGAAYFAGKGVSNEGQNASIRGSIAAAHYIRSIAPAYGIPVVLHTDHCAKKLLPWFDGMLKADEEYFAKHGEPLFSSHMLDLSEETDEENIGLCVKYFTRMAKIHQWLEMEIGITGGEEDGVNNEGTSNDKLYTTPETVFSVHEALSKISPNFSIASAFGNVHGVYKIAAALKPELLGTFQDYAAKQLNKKAEDKPLYLVFHGGSGSSTKDFHTAIDFGVVKVNLDTDCQFAYLSGIRDYVLNKKDYLMTPVGNPTGEDSPNKKYYDPRVWVREGEKTMSKRITQALEIFRTKGALE.

Ser-63 serves as a coordination point for D-glyceraldehyde 3-phosphate. Asp-110 functions as the Proton donor in the catalytic mechanism. 4 residues coordinate Zn(2+): His-111, Asp-145, Glu-175, and His-227. Gly-228 contributes to the dihydroxyacetone phosphate binding site. Residue His-266 participates in Zn(2+) binding. Residues Gly-267–Ser-269 and Asn-288–Thr-291 contribute to the dihydroxyacetone phosphate site.

It belongs to the class II fructose-bisphosphate aldolase family. In terms of assembly, homodimer. Zn(2+) is required as a cofactor.

The enzyme catalyses beta-D-fructose 1,6-bisphosphate = D-glyceraldehyde 3-phosphate + dihydroxyacetone phosphate. The protein operates within carbohydrate degradation; glycolysis; D-glyceraldehyde 3-phosphate and glycerone phosphate from D-glucose: step 4/4. Catalyzes the aldol condensation of dihydroxyacetone phosphate (DHAP or glycerone-phosphate) with glyceraldehyde 3-phosphate (G3P) to form fructose 1,6-bisphosphate (FBP) in gluconeogenesis and the reverse reaction in glycolysis. The chain is Fructose-bisphosphate aldolase (FBA1) from Kluyveromyces lactis (strain ATCC 8585 / CBS 2359 / DSM 70799 / NBRC 1267 / NRRL Y-1140 / WM37) (Yeast).